We begin with the raw amino-acid sequence, 338 residues long: Beta-ketoacyl-[acyl-carrier-protein] synthase III (338 aa).

Active-site residues include C119 and H261. The interval 262–266 (QANQR) is ACP-binding. Residue N291 is part of the active site.

Belongs to the thiolase-like superfamily. FabH family. As to quaternary structure, homodimer.

The protein resides in the cytoplasm. The enzyme catalyses malonyl-[ACP] + acetyl-CoA + H(+) = 3-oxobutanoyl-[ACP] + CO2 + CoA. The protein operates within lipid metabolism; fatty acid biosynthesis. In terms of biological role, catalyzes the condensation reaction of fatty acid synthesis by the addition to an acyl acceptor of two carbons from malonyl-ACP. Catalyzes the first condensation reaction which initiates fatty acid synthesis and may therefore play a role in governing the total rate of fatty acid production. Possesses both acetoacetyl-ACP synthase and acetyl transacylase activities. Its substrate specificity determines the biosynthesis of branched-chain and/or straight-chain of fatty acids. In Prochlorococcus marinus (strain SARG / CCMP1375 / SS120), this protein is Beta-ketoacyl-[acyl-carrier-protein] synthase III.